Here is a 96-residue protein sequence, read N- to C-terminus: Sec-independent protein translocase protein TatA (96 aa).

A helical transmembrane segment spans residues 1 to 21 (MGFSSIWHWIIVLVVVLLLFG). The segment at 42–96 (GMADDEDDEAASVSAERRGIEDGKPAQTIYPPQQPQQPQQPPQQPPVHRDDAPRG) is disordered. Residues 56–65 (AERRGIEDGK) show a composition bias toward basic and acidic residues. The segment covering 73–86 (PQQPQQPQQPPQQP) has biased composition (pro residues).

Belongs to the TatA/E family. The Tat system comprises two distinct complexes: a TatABC complex, containing multiple copies of TatA, TatB and TatC subunits, and a separate TatA complex, containing only TatA subunits. Substrates initially bind to the TatABC complex, which probably triggers association of the separate TatA complex to form the active translocon.

The protein resides in the cell inner membrane. Its function is as follows. Part of the twin-arginine translocation (Tat) system that transports large folded proteins containing a characteristic twin-arginine motif in their signal peptide across membranes. TatA could form the protein-conducting channel of the Tat system. This Rhodospirillum rubrum (strain ATCC 11170 / ATH 1.1.1 / DSM 467 / LMG 4362 / NCIMB 8255 / S1) protein is Sec-independent protein translocase protein TatA.